A 291-amino-acid chain; its full sequence is N-acetylmannosamine kinase (291 aa).

ATP-binding positions include 5–12 (AIDIGGTK) and 132–139 (GVGGGVVS). H156, C166, C168, and C173 together coordinate Zn(2+).

Belongs to the ROK (NagC/XylR) family. NanK subfamily. As to quaternary structure, homodimer.

It carries out the reaction an N-acyl-D-mannosamine + ATP = an N-acyl-D-mannosamine 6-phosphate + ADP + H(+). It participates in amino-sugar metabolism; N-acetylneuraminate degradation; D-fructose 6-phosphate from N-acetylneuraminate: step 2/5. In terms of biological role, catalyzes the phosphorylation of N-acetylmannosamine (ManNAc) to ManNAc-6-P. In Escherichia coli (strain SMS-3-5 / SECEC), this protein is N-acetylmannosamine kinase.